Consider the following 372-residue polypeptide: Lipid-A-disaccharide synthase (372 aa).

Belongs to the LpxB family.

The catalysed reaction is a lipid X + a UDP-2-N,3-O-bis[(3R)-3-hydroxyacyl]-alpha-D-glucosamine = a lipid A disaccharide + UDP + H(+). Its pathway is bacterial outer membrane biogenesis; LPS lipid A biosynthesis. Condensation of UDP-2,3-diacylglucosamine and 2,3-diacylglucosamine-1-phosphate to form lipid A disaccharide, a precursor of lipid A, a phosphorylated glycolipid that anchors the lipopolysaccharide to the outer membrane of the cell. The chain is Lipid-A-disaccharide synthase from Thiobacillus denitrificans (strain ATCC 25259 / T1).